Here is a 329-residue protein sequence, read N- to C-terminus: Ferredoxin--NADP reductase 2 (329 aa).

FAD is bound by residues Thr18, Glu37, Gln45, Tyr50, Val90, Phe124, Asp285, and Ser326.

It belongs to the ferredoxin--NADP reductase type 2 family. As to quaternary structure, homodimer. Requires FAD as cofactor.

The enzyme catalyses 2 reduced [2Fe-2S]-[ferredoxin] + NADP(+) + H(+) = 2 oxidized [2Fe-2S]-[ferredoxin] + NADPH. This is Ferredoxin--NADP reductase 2 from Bacillus cytotoxicus (strain DSM 22905 / CIP 110041 / 391-98 / NVH 391-98).